Reading from the N-terminus, the 223-residue chain is Adenylate kinase 4, mitochondrial (223 aa).

Position 15-20 (15-20 (GSGKGT)) interacts with a ribonucleoside 5'-triphosphate. The NMP stretch occupies residues 35–64 (SSGHFLRENIKANTEVGEMAKQYIEKSLLV). Residues Ser36 and Arg41 each coordinate AMP. Lys60 bears the N6-succinyllysine mark. AMP contacts are provided by residues 62–64 (LLV), 89–92 (GFPR), and Gln96. An LID region spans residues 125–162 (RRWIHPPSGRVYNLDFNPPHVHGIDDVTGEPLVQQEDD). Residues Arg126 and 135 to 136 (VY) each bind a ribonucleoside 5'-triphosphate. Arg170 contributes to the AMP binding site. Position 175 is an N6-acetyllysine (Lys175). 2 positions are modified to N6-acetyllysine; alternate: Lys179 and Lys186. 2 positions are modified to N6-succinyllysine; alternate: Lys179 and Lys186. Thr199 lines the a ribonucleoside 5'-triphosphate pocket.

Belongs to the adenylate kinase family. AK3 subfamily. In terms of assembly, monomer. Interacts with SLC25A5/ANT2.

The protein localises to the mitochondrion matrix. The enzyme catalyses a ribonucleoside 5'-phosphate + ATP = a ribonucleoside 5'-diphosphate + ADP. The catalysed reaction is AMP + ATP = 2 ADP. It carries out the reaction GTP + AMP = GDP + ADP. It catalyses the reaction CMP + ATP = CDP + ADP. The enzyme catalyses GTP + CMP = CDP + GDP. The catalysed reaction is dAMP + ATP = dADP + ADP. It carries out the reaction dCMP + ATP = dCDP + ADP. It catalyses the reaction a 2'-deoxyribonucleoside 5'-diphosphate + ATP = a 2'-deoxyribonucleoside 5'-triphosphate + ADP. The enzyme catalyses a ribonucleoside 5'-diphosphate + ATP = a ribonucleoside 5'-triphosphate + ADP. The catalysed reaction is GDP + ATP = GTP + ADP. It carries out the reaction CDP + GTP = CTP + GDP. It catalyses the reaction CDP + ATP = CTP + ADP. The enzyme catalyses UDP + ATP = UTP + ADP. The catalysed reaction is GTP + UDP = UTP + GDP. It carries out the reaction dADP + GTP = dATP + GDP. It catalyses the reaction dCDP + GTP = dCTP + GDP. The enzyme catalyses dCDP + ATP = dCTP + ADP. The catalysed reaction is dGDP + ATP = dGTP + ADP. It carries out the reaction dTDP + GTP = dTTP + GDP. It catalyses the reaction dTDP + ATP = dTTP + ADP. Functionally, broad-specificity mitochondrial nucleoside phosphate kinase involved in cellular nucleotide homeostasis by catalyzing nucleoside-phosphate interconversions. Similar to other adenylate kinases, preferentially catalyzes the phosphorylation of the nucleoside monophosphate AMP with ATP as phosphate donor to produce ADP. Phosphorylates only AMP when using GTP as phosphate donor. In vitro, can also catalyze the phosphorylation of CMP, dAMP and dCMP and use GTP as an alternate phosphate donor. Moreover, exhibits a diphosphate kinase activity, producing ATP, CTP, GTP, UTP, TTP, dATP, dCTP and dGTP from the corresponding diphosphate substrates with either ATP or GTP as phosphate donors. Plays a role in controlling cellular ATP levels by regulating phosphorylation and activation of the energy sensor protein kinase AMPK. Plays a protective role in the cellular response to oxidative stress. This Pongo abelii (Sumatran orangutan) protein is Adenylate kinase 4, mitochondrial.